We begin with the raw amino-acid sequence, 121 residues long: UPF0091 protein PH1428 (121 aa).

The protein belongs to the UPF0091 family.

This chain is UPF0091 protein PH1428, found in Pyrococcus horikoshii (strain ATCC 700860 / DSM 12428 / JCM 9974 / NBRC 100139 / OT-3).